A 195-amino-acid polypeptide reads, in one-letter code: Peptidyl-tRNA hydrolase (195 aa).

Position 18 (tyrosine 18) interacts with tRNA. The active-site Proton acceptor is histidine 23. Residues phenylalanine 69, asparagine 71, and asparagine 117 each coordinate tRNA.

This sequence belongs to the PTH family. As to quaternary structure, monomer.

Its subcellular location is the cytoplasm. The enzyme catalyses an N-acyl-L-alpha-aminoacyl-tRNA + H2O = an N-acyl-L-amino acid + a tRNA + H(+). Hydrolyzes ribosome-free peptidyl-tRNAs (with 1 or more amino acids incorporated), which drop off the ribosome during protein synthesis, or as a result of ribosome stalling. Its function is as follows. Catalyzes the release of premature peptidyl moieties from peptidyl-tRNA molecules trapped in stalled 50S ribosomal subunits, and thus maintains levels of free tRNAs and 50S ribosomes. This Alcanivorax borkumensis (strain ATCC 700651 / DSM 11573 / NCIMB 13689 / SK2) protein is Peptidyl-tRNA hydrolase.